We begin with the raw amino-acid sequence, 230 residues long: Ion-translocating oxidoreductase complex subunit E (230 aa).

The Cytoplasmic portion of the chain corresponds to 1-17 (MSENRTLMLNGMWNNNP). 2 consecutive transmembrane segments (helical) span residues 18-38 (ALVQ…VTNA) and 39-59 (LGLG…VSLV). At 60 to 68 (RDYVPKEVR) the chain is on the cytoplasmic side. Residues 69–89 (IPVFVMIIASLVTCVQLLMNA) traverse the membrane as a helical segment. The Periplasmic segment spans residues 90–92 (YAY). The helical transmembrane segment at 93–113 (GLYLSLGIFIPLIVTNCIIIG) threads the bilayer. Residues 114–123 (RAEAFASKND) are Cytoplasmic-facing. The chain crosses the membrane as a helical span at residues 124–144 (VLPAALDGFWMGLGMTSVLVV). Residues 145-181 (LGSLREIIGNGTLFDGADLLLGEWAKVLRIEVFHFDS) lie on the Periplasmic side of the membrane. The helical transmembrane segment at 182-202 (AFLLALLPPGAFIGVGFLIAA) threads the bilayer. The Cytoplasmic portion of the chain corresponds to 203-230 (KSVIDKQIAARQPKQQKQAIERARVTNV).

It belongs to the NqrDE/RnfAE family. In terms of assembly, the complex is composed of six subunits: RnfA, RnfB, RnfC, RnfD, RnfE and RnfG.

It localises to the cell inner membrane. Its function is as follows. Part of a membrane-bound complex that couples electron transfer with translocation of ions across the membrane. In Vibrio cholerae serotype O1 (strain ATCC 39541 / Classical Ogawa 395 / O395), this protein is Ion-translocating oxidoreductase complex subunit E.